A 591-amino-acid polypeptide reads, in one-letter code: V-type ATP synthase alpha chain (591 aa).

233 to 240 is a binding site for ATP; the sequence is GPFGAGKT.

It belongs to the ATPase alpha/beta chains family.

It catalyses the reaction ATP + H2O + 4 H(+)(in) = ADP + phosphate + 5 H(+)(out). Its function is as follows. Produces ATP from ADP in the presence of a proton gradient across the membrane. The V-type alpha chain is a catalytic subunit. The sequence is that of V-type ATP synthase alpha chain from Streptococcus pyogenes serotype M18 (strain MGAS8232).